Consider the following 1259-residue polypeptide: Trafficking protein particle complex II-specific subunit 130 homolog (1259 aa).

Ala-2 bears the N-acetylalanine mark. Residues 479–526 (GNIPEMFDGRPSFTEGSGLEASPRTPSSLKVQAPPMSRTNSSPGNFES) are disordered.

It belongs to the TMEM1 family. In terms of assembly, part of the multisubunit TRAPP (transport protein particle) II complex composed of BET3, BET5, TRS20, TRS23, TRS31, TRS33, TRS65, TRS85, TRS120 and TRS130.

Its subcellular location is the golgi apparatus. The protein resides in the trans-Golgi network. It localises to the early endosome. Specific subunit of the TRAPP II complex, a highly conserved vesicle tethering complex that is required for the proper transport of proteins in post-Golgi trafficking pathways to the growing cell plate in mitotic active cells. Required for the polarized and selective transport of PIN2, but not PIN1, to the plasma membrane. Not required for ER-to-Golgi as well as biosynthetic and endocytic vacuolar transport. The polypeptide is Trafficking protein particle complex II-specific subunit 130 homolog (Arabidopsis thaliana (Mouse-ear cress)).